The primary structure comprises 321 residues: Iron(3+)-hydroxamate-binding protein YxeB (321 aa).

An N-terminal signal peptide occupies residues 1 to 20 (MKKNILLVGMLVLLLMFVSA). C21 is lipidated: N-palmitoyl cysteine. C21 carries S-diacylglycerol cysteine lipidation. Residues 24–33 (TASKGSSSDS) are compositionally biased toward low complexity. The disordered stretch occupies residues 24 to 48 (TASKGSSSDSASEKTEMRTYKSPKG). The Fe/B12 periplasmic-binding domain occupies 58-316 (RIVTDFYAGE…IITDMLIKRA (259 aa)).

Belongs to the bacterial solute-binding protein 8 family. In terms of assembly, the complex is composed of an ATP-binding protein (FhuC), two transmembrane proteins (FhuB and FhuG) and a solute-binding protein (FhuD or YxeB).

It is found in the cell membrane. It localises to the membrane raft. In terms of biological role, part of the ABC transporter complex FhuCBGD involved in iron(3+)-hydroxamate import. Binds the iron(3+)-hydroxamate complex and transfers it to the membrane-bound permease. Partially required for the transport of desferrioxamine. This is Iron(3+)-hydroxamate-binding protein YxeB (yxeB) from Bacillus subtilis (strain 168).